We begin with the raw amino-acid sequence, 183 residues long: Negative modulator of initiation of replication (183 aa).

Residues 90-91 form an interaction with DNA region; sequence AV.

This sequence belongs to the SeqA family. Homodimer. Polymerizes to form helical filaments.

The protein resides in the cytoplasm. Negative regulator of replication initiation, which contributes to regulation of DNA replication and ensures that replication initiation occurs exactly once per chromosome per cell cycle. Binds to pairs of hemimethylated GATC sequences in the oriC region, thus preventing assembly of replication proteins and re-initiation at newly replicated origins. Repression is relieved when the region becomes fully methylated. This is Negative modulator of initiation of replication from Shewanella oneidensis (strain ATCC 700550 / JCM 31522 / CIP 106686 / LMG 19005 / NCIMB 14063 / MR-1).